The primary structure comprises 685 residues: Beta-taxilin (685 aa).

A disordered region spans residues 1-135; sequence MEINHPDQLS…KEPVSNKEQK (135 aa). Residues 18 to 28 are compositionally biased toward polar residues; the sequence is GDSSSLNQNGP. Basic and acidic residues-rich tracts occupy residues 47–67 and 80–90; these read GSLH…RQLE and RGKESTSETKE. Positions 98-113 are enriched in acidic residues; that stretch reads PDNEDVDYEETTEEID. Coiled coils occupy residues 138 to 354 and 381 to 470; these read KKIL…VLKE and NEVF…SEKE. Over residues 465 to 478 the composition is skewed to basic and acidic residues; it reads KMSEKEDQVQRTSE. Disordered regions lie at residues 465–497 and 517–685; these read KMSE…EEAN and EFTP…NGVD. Phosphoserine is present on residues Ser477, Ser484, and Ser486. Residues 479-495 are compositionally biased toward acidic residues; that stretch reads EEPEPSVSENEEVDAEE. The span at 575 to 591 shows a compositional bias: low complexity; that stretch reads CEATPAPTASCTPAEAE. Residues 612-627 show a composition bias toward polar residues; it reads ANTSGQAPLSPAQGSL.

It belongs to the taxilin family. As to quaternary structure, binds to the C-terminal coiled coil region of syntaxin family members STX1A, STX3A and STX4A. Has a preference for STX1A. As to expression, specifically expressed in skeletal muscle.

In terms of biological role, promotes motor nerve regeneration. May be involved in intracellular vesicle traffic. This chain is Beta-taxilin (Txlnb), found in Mus musculus (Mouse).